Here is an 84-residue protein sequence, read N- to C-terminus: N.vectensis toxin 5 (84 aa).

Residues 1–21 (MNSLLKVAVVCLVMLVACSSG) form the signal peptide. 3 disulfide bridges follow: cysteine 45–cysteine 77, cysteine 47–cysteine 68, and cysteine 61–cysteine 78.

Expressed in ectodermal gland cells. In adult female tissues, highly transcribed in mesenteries (gametes-producing tissue) and slightly transcribed in tentacles, pharynx and physa.

Functionally, has toxic effects on zebrafish larvae. It causes contractile paralysis and twitching of the tail within 20 minutes, followed by death within 30 minutes. Does not show any toxicity when injected into arthropods (cherry shrimps or grass shrimps). This is N.vectensis toxin 5 from Nematostella vectensis (Starlet sea anemone).